The sequence spans 255 residues: 5'-nucleotidase SurE (255 aa).

A divalent metal cation is bound by residues Asp-8, Asp-9, Ser-40, and Asn-93.

The protein belongs to the SurE nucleotidase family. A divalent metal cation serves as cofactor.

The protein resides in the cytoplasm. The enzyme catalyses a ribonucleoside 5'-phosphate + H2O = a ribonucleoside + phosphate. Its function is as follows. Nucleotidase that shows phosphatase activity on nucleoside 5'-monophosphates. The protein is 5'-nucleotidase SurE of Nitrobacter hamburgensis (strain DSM 10229 / NCIMB 13809 / X14).